We begin with the raw amino-acid sequence, 1255 residues long: Bifunctional autolysin (1255 aa).

A signal peptide spans M1 to A36. Disordered stretches follow at residues G110–V141 and V193–P218. An N-acetylmuramoyl-L-alanine amidase region spans residues S199–A775. 7 GW domains span residues T442–A516, S518–K592, T611–A685, S687–A761, T783–L858, K860–A935, and A942–I1016. Residues Y776–K1255 form an endo-beta-N-acetylglucosaminidase region.

The protein in the N-terminal section; belongs to the N-acetylmuramoyl-L-alanine amidase 2 family. It in the C-terminal section; belongs to the glycosyl hydrolase 73 family. Oligomer; forms a ring structure at the cell surface which is important for efficient partitioning of daughter cells after cell division. Undergoes proteolytic processing to generate the two extracellular lytic enzymes, probably at the septal region on the cell surface.

Its subcellular location is the secreted. The catalysed reaction is Hydrolyzes the link between N-acetylmuramoyl residues and L-amino acid residues in certain cell-wall glycopeptides.. It catalyses the reaction an N(4)-(oligosaccharide-(1-&gt;3)-[oligosaccharide-(1-&gt;6)]-beta-D-Man-(1-&gt;4)-beta-D-GlcNAc-(1-&gt;4)-alpha-D-GlcNAc)-L-asparaginyl-[protein] + H2O = an oligosaccharide-(1-&gt;3)-[oligosaccharide-(1-&gt;6)]-beta-D-Man-(1-&gt;4)-D-GlcNAc + N(4)-(N-acetyl-beta-D-glucosaminyl)-L-asparaginyl-[protein]. In terms of biological role, endohydrolysis of the di-N-acetylchitobiosyl unit in high-mannose glycopeptides and glycoproteins containing the -[(Man)5(GlcNAc)2]-Asn structure. One N-acetyl-D-glucosamine residue remains attached to the protein; the rest of the oligosaccharide is released intact. Cleaves the peptidoglycan connecting the daughter cells at the end of the cell division cycle, resulting in the separation of the two newly divided cells. Acts as an autolysin in penicillin-induced lysis. This chain is Bifunctional autolysin (atl), found in Staphylococcus aureus (strain Mu3 / ATCC 700698).